A 289-amino-acid chain; its full sequence is Glucosamine-6-phosphate deaminase 1 (289 aa).

K64 is modified (N6-acetyllysine). The active-site Proton acceptor; for enolization step is the D72. The For ring-opening step role is filled by D141. H143 (proton acceptor; for ring-opening step) is an active-site residue. E148 serves as the catalytic For ring-opening step. Phosphothreonine is present on T161.

It belongs to the glucosamine/galactosamine-6-phosphate isomerase family. In terms of assembly, homohexamer.

It is found in the cytoplasm. It catalyses the reaction alpha-D-glucosamine 6-phosphate + H2O = beta-D-fructose 6-phosphate + NH4(+). The protein operates within nucleotide-sugar biosynthesis; UDP-N-acetyl-alpha-D-glucosamine biosynthesis; alpha-D-glucosamine 6-phosphate from D-fructose 6-phosphate: step 1/1. With respect to regulation, allosterically activated by N-acetylglucosamine-6-phosphate (GlcNAc6P). Catalyzes the reversible conversion of alpha-D-glucosamine 6-phosphate (GlcN-6P) into beta-D-fructose 6-phosphate (Fru-6P) and ammonium ion, a regulatory reaction step in de novo uridine diphosphate-N-acetyl-alpha-D-glucosamine (UDP-GlcNAc) biosynthesis via hexosamine pathway. Deamination is coupled to aldo-keto isomerization mediating the metabolic flux from UDP-GlcNAc toward Fru-6P. At high ammonium level can drive amination and isomerization of Fru-6P toward hexosamines and UDP-GlcNAc synthesis. Has a role in fine tuning the metabolic fluctuations of cytosolic UDP-GlcNAc and their effects on hyaluronan synthesis that occur during tissue remodeling. Seems to trigger calcium oscillations in mammalian eggs. These oscillations serve as the essential trigger for egg activation and early development of the embryo. The protein is Glucosamine-6-phosphate deaminase 1 of Pongo abelii (Sumatran orangutan).